We begin with the raw amino-acid sequence, 365 residues long: Zinc finger MYND domain-containing protein 12 (365 aa).

Zn(2+)-binding residues include Cys-17, Cys-20, Cys-28, Cys-31, Cys-37, His-41, His-50, and Cys-54. The MYND-type; atypical zinc-finger motif lies at 17–54; it reads CEVCEAPAERVCAACTVTYYCGVVHQKADWDSIHEKIC. TPR repeat units lie at residues 172-205 and 214-247; these read SLLHRNLGLLYIAKKNYEEARYHLANDIYFASCA and SGGYFHLANIFYDLKKLDLADTLYTKVSEIWHAY.

As to expression, expressed predominantly in the testis.

The protein localises to the cell projection. It localises to the cilium. It is found in the flagellum. Required for sperm flagellum function and male fertility. This chain is Zinc finger MYND domain-containing protein 12 (ZMYND12), found in Homo sapiens (Human).